A 574-amino-acid polypeptide reads, in one-letter code: (R)-mandelonitrile lyase 4 (574 aa).

Positions 1–27 are cleaved as a signal peptide; the sequence is MEKSTMSAVVLVLNLLVLHLQYSEVHS. A glycan (N-linked (GlcNAc...) asparagine) is linked at N30. Residue 64–65 coordinates FAD; that stretch reads TS. Residue N76 is glycosylated (N-linked (GlcNAc...) asparagine). Residues 83–84, T134, and 138–141 each bind FAD; these read ER and NAGV. Residues N146, N151, and N179 are each glycosylated (N-linked (GlcNAc...) asparagine). V245 contacts FAD. Residues N268 and N310 are each glycosylated (N-linked (GlcNAc...) asparagine). C357 provides a ligand contact to substrate. N-linked (GlcNAc...) asparagine glycosylation is found at N381, N407, and N468. A disulfide bridge connects residues C428 and C479. Y486 contacts substrate. Residues 487 to 488 and G516 each bind FAD; that span reads WH. Residue H488 is the Proton donor of the active site. H526 acts as the Proton acceptor in catalysis. Residue 527 to 528 participates in FAD binding; it reads PQ.

The protein belongs to the GMC oxidoreductase family. Monomer. It depends on FAD as a cofactor.

It is found in the vacuole. The protein resides in the aleurone grain. It catalyses the reaction (R)-mandelonitrile = benzaldehyde + hydrogen cyanide. Its function is as follows. Involved in cyanogenesis, the release of HCN from injured tissues. Catalyzes the stereospecific addition of HCN to a variety of aldehydes in vitro. It is a major seed constituent, and could have the additional role of a storage form for reduced nitrogen. This chain is (R)-mandelonitrile lyase 4 (MDL4), found in Prunus serotina (Black cherry).